Reading from the N-terminus, the 225-residue chain is UPF0758 protein BCB4264_A4572 (225 aa).

The MPN domain maps to 103–225 (SIRSPEDCAK…FVSLKEKGHI (123 aa)). The Zn(2+) site is built by His-174, His-176, and Asp-187. The short motif at 174–187 (HNHPSGDPTPSRED) is the JAMM motif element.

It belongs to the UPF0758 family.

The polypeptide is UPF0758 protein BCB4264_A4572 (Bacillus cereus (strain B4264)).